A 467-amino-acid chain; its full sequence is Probable protein phosphatase 2C 6 (467 aa).

The disordered stretch occupies residues 61–81; it reads VEDDAVAPGRGEEGGEASAVG. In terms of domain architecture, PPM-type phosphatase spans 149-457; the sequence is LWGHKSICGR…DNISVIVVDL (309 aa). Mn(2+) is bound by residues Asp205, Gly206, Asp386, and Asp448.

This sequence belongs to the PP2C family. Interacts with PYL9. Requires Mg(2+) as cofactor. Mn(2+) is required as a cofactor.

It localises to the nucleus. Its subcellular location is the cytoplasm. The protein localises to the cytosol. The catalysed reaction is O-phospho-L-seryl-[protein] + H2O = L-seryl-[protein] + phosphate. It catalyses the reaction O-phospho-L-threonyl-[protein] + H2O = L-threonyl-[protein] + phosphate. Its function is as follows. Probable protein phosphatase that may function in abscisic acid (ABA) signaling. The sequence is that of Probable protein phosphatase 2C 6 from Oryza sativa subsp. japonica (Rice).